The primary structure comprises 366 residues: N-acetyl-L-citrulline deacetylase (366 aa).

Co(2+)-binding residues include His-72 and Asp-103. Catalysis depends on Glu-130, which acts as the Proton donor/acceptor. Glu-155 serves as a coordination point for Co(2+).

Belongs to the peptidase M20A family. N-acetylcitrulline deacetylase subfamily. As to quaternary structure, forms homodimers in the crystal, but higher order oligomers may form in solution. Co(2+) serves as cofactor.

The enzyme catalyses N(2)-acetyl-L-citrulline + H2O = L-citrulline + acetate. It carries out the reaction N(2)-acetyl-L-ornithine + H2O = L-ornithine + acetate. Its pathway is amino-acid biosynthesis; L-arginine biosynthesis. Its function is as follows. Catalyzes the deacetylation of N-acetyl-L-citrulline to produce L-citrulline. This is a step in an alternative arginine biosynthesis pathway. Is also able to catalyze the deacetylation of N-acetylornithine in vitro, with almost equal velocity. However, this reaction may be not relevant in vivo since Xanthomonas does not possess the canonical argF gene and cannot convert ornithine to citrulline via ArgF'. This Xanthomonas campestris pv. campestris (strain ATCC 33913 / DSM 3586 / NCPPB 528 / LMG 568 / P 25) protein is N-acetyl-L-citrulline deacetylase.